The following is a 202-amino-acid chain: Glycerol-3-phosphate acyltransferase (202 aa).

A run of 6 helical transmembrane segments spans residues 2–22 (INLLFAVIAYLIGSVSFAVVV), 51–71 (KAAIFTLIGDALKGLAAVLLA), 80–100 (VDETGIALVALAVFLGHLFPL), 116–136 (ILFAIDPILGAGTLATWLIIA), 137–157 (FFFRYSSLAALISAIFAPFFY), and 158–178 (VLMNGVDIMAGAILVISVLLI).

It belongs to the PlsY family. In terms of assembly, probably interacts with PlsX.

It localises to the cell inner membrane. It catalyses the reaction an acyl phosphate + sn-glycerol 3-phosphate = a 1-acyl-sn-glycero-3-phosphate + phosphate. It functions in the pathway lipid metabolism; phospholipid metabolism. Its function is as follows. Catalyzes the transfer of an acyl group from acyl-phosphate (acyl-PO(4)) to glycerol-3-phosphate (G3P) to form lysophosphatidic acid (LPA). This enzyme utilizes acyl-phosphate as fatty acyl donor, but not acyl-CoA or acyl-ACP. This is Glycerol-3-phosphate acyltransferase from Cupriavidus metallidurans (strain ATCC 43123 / DSM 2839 / NBRC 102507 / CH34) (Ralstonia metallidurans).